The chain runs to 984 residues: Probable translation initiation factor IF-2 (984 aa).

One can recognise a DOD-type homing endonuclease domain in the interval 94–215 (VNGWYSVTVT…LPLLLLRFGI (122 aa)). One can recognise a tr-type G domain in the interval 391–608 (TTETHNFVAN…LIAGLSQKYL (218 aa)). Residues 464 to 468 (DTPGH) and 518 to 521 (NKID) contribute to the GTP site.

It belongs to the TRAFAC class translation factor GTPase superfamily. Classic translation factor GTPase family. IF-2 subfamily. In terms of processing, this protein undergoes a protein self splicing that involves a post-translational excision of the intervening region (intein) followed by peptide ligation.

In terms of biological role, function in general translation initiation by promoting the binding of the formylmethionine-tRNA to ribosomes. Seems to function along with eIF-2. This chain is Probable translation initiation factor IF-2 (infB), found in Pyrococcus furiosus (strain ATCC 43587 / DSM 3638 / JCM 8422 / Vc1).